Reading from the N-terminus, the 443-residue chain is Adenylyltransferase and sulfurtransferase UBA4 (443 aa).

Residues Gly83, Asp104, 111 to 115 (SNLHR), Lys128, and 172 to 173 (DT) each bind ATP. Residues Cys214 and Cys217 each contribute to the Zn(2+) site. Cys231 functions as the Glycyl thioester intermediate; for adenylyltransferase activity in the catalytic mechanism. Zn(2+) contacts are provided by Cys292 and Cys295. Positions 343–441 (QSKAPVLLDV…WSDIVNPKFP (99 aa)) constitute a Rhodanese domain. The active-site Cysteine persulfide intermediate; for sulfurtransferase activity is the Cys400.

This sequence in the N-terminal section; belongs to the HesA/MoeB/ThiF family. UBA4 subfamily. Zn(2+) serves as cofactor.

Its subcellular location is the cytoplasm. The protein localises to the cytosol. It functions in the pathway tRNA modification; 5-methoxycarbonylmethyl-2-thiouridine-tRNA biosynthesis. In terms of biological role, plays a central role in 2-thiolation of mcm(5)S(2)U at tRNA wobble positions of cytosolic tRNA(Lys), tRNA(Glu) and tRNA(Gln). Acts by mediating the C-terminal thiocarboxylation of sulfur carrier URM1. Its N-terminus first activates URM1 as acyl-adenylate (-COAMP), then the persulfide sulfur on the catalytic cysteine is transferred to URM1 to form thiocarboxylation (-COSH) of its C-terminus. The reaction probably involves hydrogen sulfide that is generated from the persulfide intermediate and that acts as a nucleophile towards URM1. Subsequently, a transient disulfide bond is formed. Does not use thiosulfate as sulfur donor; NFS1 probably acting as a sulfur donor for thiocarboxylation reactions. Prior mcm(5) tRNA modification by the elongator complex is required for 2-thiolation. May also be involved in protein urmylation. The chain is Adenylyltransferase and sulfurtransferase UBA4 from Scheffersomyces stipitis (strain ATCC 58785 / CBS 6054 / NBRC 10063 / NRRL Y-11545) (Yeast).